The sequence spans 368 residues: RING finger protein 32 (368 aa).

A disordered region spans residues 45 to 82; sequence RKKEKKSKSLKRDATAIIDTGLRKSTEGPNMEDPEKEY. Residues 129–171 form an RING-type 1; atypical zinc finger; it reads CPICKEEFELHPQVLLSCSHVFHRACLQAFEKFTNKKTCPLCR. Residues 188–217 enclose the IQ domain; that stretch reads RVKCATRIQAYWRGYIVRKWYRNLRKIIPP. The RING-type 2; atypical zinc-finger motif lies at 295-358; it reads CSICLTPLSF…APFHVCPLCR (64 aa).

The protein resides in the cytoplasm. Functionally, may play a role in sperm formation. The polypeptide is RING finger protein 32 (Rnf32) (Mus musculus (Mouse)).